Here is a 313-residue protein sequence, read N- to C-terminus: Chemotaxis protein CheV2 (313 aa).

A CheW-like domain is found at 16 to 172 (EAQFLCFRLD…VEKMISDVFP (157 aa)). A Response regulatory domain is found at 193–313 (LILIAEDSLS…IHEMLKKTLS (121 aa)). At Asp246 the chain carries 4-aspartylphosphate.

Phosphorylated; probably by transfer of CheAY phosphate group.

Functionally, plays a role in chemotaxis signal transduction system in order to colonize the host stomach. May act as a phosphate sink to control the flow of phosphate to CheAY. This is Chemotaxis protein CheV2 from Helicobacter pylori (strain ATCC 700392 / 26695) (Campylobacter pylori).